The chain runs to 222 residues: Guanylate kinase (222 aa).

Residues 19 to 197 (GFLFILSSPS…SVSLIKSIYL (179 aa)) enclose the Guanylate kinase-like domain. Residue 26–33 (SPSGAGKS) coordinates ATP.

It belongs to the guanylate kinase family.

It is found in the cytoplasm. The catalysed reaction is GMP + ATP = GDP + ADP. Functionally, essential for recycling GMP and indirectly, cGMP. This Bartonella henselae (strain ATCC 49882 / DSM 28221 / CCUG 30454 / Houston 1) (Rochalimaea henselae) protein is Guanylate kinase.